We begin with the raw amino-acid sequence, 208 residues long: Fucoxanthin-chlorophyll a-c binding protein, chloroplastic (208 aa).

The N-terminal 31 residues, 1-31 (MMTLASLPSTAIAGLASAAPKVQPRMAANDE), are a transit peptide targeting the chloroplast. A helical transmembrane segment spans residues 102-118 (IPQLPYWLWIVMTIGIG).

It belongs to the fucoxanthin chlorophyll protein family. The LHC complex of chromophytic algae is composed of fucoxanthin, chlorophyll A and C bound non-covalently by fucoxanthin chlorophyll proteins (FCPs). The ratio of pigments in this LHC is; fucoxanthin: chlorophyll C: chlorophyll A; (0.6-1): (0.1-0.3): (1).

It is found in the plastid. The protein localises to the chloroplast thylakoid membrane. Its function is as follows. The light-harvesting complex (LHC) functions as a light receptor, it captures and delivers excitation energy to photosystems with which it is closely associated. Energy is transferred from the carotenoid and chlorophyll C (or B) to chlorophyll A and the photosynthetic reaction centers where it is used to synthesize ATP and reducing power. This is Fucoxanthin-chlorophyll a-c binding protein, chloroplastic (FCP) from Isochrysis galbana (Marine planktonic alga).